An 88-amino-acid polypeptide reads, in one-letter code: Small cysteine-rich outer membrane protein OmcA (88 aa).

The N-terminal stretch at 1–18 (MKKTALLAALCSVVSLSS) is a signal peptide. A lipid anchor (N-palmitoyl cysteine) is attached at Cys19. Cys19 carries the S-diacylglycerol cysteine lipid modification.

In terms of assembly, part of a disulfide cross-linked outer membrane complex (COMC) composed of the major outer membrane porin (MOMP), the small cysteine-rich protein (OmcA) and the large cysteine-rich periplasmic protein (OmcB).

Its subcellular location is the cell outer membrane. Functionally, in elementary bodies (EBs, the infectious stage, which is able to survive outside the host cell) provides the structural integrity of the outer envelope through disulfide cross-links with the large cysteine-rich periplasmic protein and the major outer membrane porin. It has been described in publications as the Sarkosyl-insoluble COMC (Chlamydia outer membrane complex), and serves as the functional equivalent of peptidoglycan. The polypeptide is Small cysteine-rich outer membrane protein OmcA (omcA) (Chlamydia trachomatis serovar B (strain Jali20/OT)).